The sequence spans 413 residues: Serine hydroxymethyltransferase (413 aa).

(6S)-5,6,7,8-tetrahydrofolate is bound by residues L117 and 121–123 (GHL). K226 bears the N6-(pyridoxal phosphate)lysine mark. 349–351 (SPF) is a binding site for (6S)-5,6,7,8-tetrahydrofolate.

It belongs to the SHMT family. As to quaternary structure, homodimer. Pyridoxal 5'-phosphate serves as cofactor.

It is found in the cytoplasm. It catalyses the reaction (6R)-5,10-methylene-5,6,7,8-tetrahydrofolate + glycine + H2O = (6S)-5,6,7,8-tetrahydrofolate + L-serine. The protein operates within one-carbon metabolism; tetrahydrofolate interconversion. It functions in the pathway amino-acid biosynthesis; glycine biosynthesis; glycine from L-serine: step 1/1. Catalyzes the reversible interconversion of serine and glycine with tetrahydrofolate (THF) serving as the one-carbon carrier. This reaction serves as the major source of one-carbon groups required for the biosynthesis of purines, thymidylate, methionine, and other important biomolecules. Also exhibits THF-independent aldolase activity toward beta-hydroxyamino acids, producing glycine and aldehydes, via a retro-aldol mechanism. The sequence is that of Serine hydroxymethyltransferase from Listeria innocua serovar 6a (strain ATCC BAA-680 / CLIP 11262).